The chain runs to 410 residues: Arginine deiminase (410 aa).

Catalysis depends on Cys-400, which acts as the Amidino-cysteine intermediate.

Belongs to the arginine deiminase family.

It localises to the cytoplasm. It carries out the reaction L-arginine + H2O = L-citrulline + NH4(+). The protein operates within amino-acid degradation; L-arginine degradation via ADI pathway; carbamoyl phosphate from L-arginine: step 1/2. The chain is Arginine deiminase from Bacillus cytotoxicus (strain DSM 22905 / CIP 110041 / 391-98 / NVH 391-98).